A 79-amino-acid chain; its full sequence is UPF0154 protein SAK_1616 (79 aa).

Residues 5 to 25 (IWILLIIVALFGGLVGGIFIA) traverse the membrane as a helical segment.

It belongs to the UPF0154 family.

It localises to the cell membrane. The protein is UPF0154 protein SAK_1616 of Streptococcus agalactiae serotype Ia (strain ATCC 27591 / A909 / CDC SS700).